The following is an 880-amino-acid chain: Alanine--tRNA ligase (880 aa).

The Zn(2+) site is built by histidine 567, histidine 571, cysteine 669, and histidine 673.

This sequence belongs to the class-II aminoacyl-tRNA synthetase family. Zn(2+) is required as a cofactor.

It is found in the cytoplasm. The catalysed reaction is tRNA(Ala) + L-alanine + ATP = L-alanyl-tRNA(Ala) + AMP + diphosphate. Its function is as follows. Catalyzes the attachment of alanine to tRNA(Ala) in a two-step reaction: alanine is first activated by ATP to form Ala-AMP and then transferred to the acceptor end of tRNA(Ala). Also edits incorrectly charged Ser-tRNA(Ala) and Gly-tRNA(Ala) via its editing domain. The chain is Alanine--tRNA ligase from Bacillus thuringiensis subsp. konkukian (strain 97-27).